We begin with the raw amino-acid sequence, 875 residues long: GATOR2 complex protein MIOS (875 aa).

6 WD repeats span residues 58–100 (SDTP…NSKF), 111–155 (KHAR…TPDI), 182–221 (GQNDACLSLCWLPRDQKLLLAGMHRNLAIFDLRNTSQKMF), 223–261 (NTKAVQGVTVDPYFHDRVASFYEGQVAIWDLRKFEKPVL), 265–306 (EQPK…TPIG), and 395–437 (RLRA…KQYT). A C4-type zinc finger spans residues 735-781 (VSCNFCGKSISYSCSAVPHQGRGFSQYGVSGSPTKSKVTSCPGCRKP). Zn(2+)-binding residues include Cys-737 and Cys-740. Phosphoserine occurs at positions 759 and 766. The Zn(2+) site is built by Cys-775, Cys-778, Cys-788, Cys-827, Cys-830, His-832, His-835, His-838, Cys-849, Cys-854, and Cys-858. The RING-type; atypical zinc finger occupies 782 to 863 (LPRCALCLIN…CTCKCMQLDT (82 aa)).

This sequence belongs to the WD repeat mio family. As to quaternary structure, component of the GATOR2 subcomplex, composed of MIOS, SEC13, SEH1L, WDR24 and WDR59. The GATOR2 complex interacts with CASTOR1 and CASTOR2; the interaction is negatively regulated by arginine. CASTOR1 and CASTOR2 convey leucine availability via direct interaction with MIOS. The GATOR2 complex interacts with SESN1, SESN2 and SESN3; the interaction is negatively regulated by amino acids. Interacts with SAR1A and SAR1B; the interaction is direct, disrupted by leucine and mediates the interaction of SAR1A or SAR1B with the GATOR2 complex to negatively regulate the TORC1 signaling upon leucine deprivation.

It localises to the lysosome membrane. Its activity is regulated as follows. The GATOR2 complex is negatively regulated by the upstream amino acid sensors CASTOR1 and SESN2, which sequester the GATOR2 complex in absence of amino acids. In the presence of abundant amino acids, GATOR2 is released from CASTOR1 and SESN2 and activated. Functionally, as a component of the GATOR2 complex, functions as an activator of the amino acid-sensing branch of the mTORC1 signaling pathway. The GATOR2 complex indirectly activates mTORC1 through the inhibition of the GATOR1 subcomplex. GATOR2 probably acts as an E3 ubiquitin-protein ligase toward GATOR1. In the presence of abundant amino acids, the GATOR2 complex mediates ubiquitination of the NPRL2 core component of the GATOR1 complex, leading to GATOR1 inactivation. In the absence of amino acids, GATOR2 is inhibited, activating the GATOR1 complex. Within the GATOR2 complex, MIOS is required to prevent autoubiquitination of WDR24, the catalytic subunit of the complex. The GATOR2 complex is required for brain myelination. This is GATOR2 complex protein MIOS from Homo sapiens (Human).